A 311-amino-acid chain; its full sequence is Giardin subunit gamma (311 aa).

Positions 185-233 (GLQTEINSLEAIIEREFAQAANRLNQEVSNFKESFDASERNIKLQKKHV) form a coiled coil.

As to quaternary structure, interacts with EB1.

Its subcellular location is the cytoplasm. It is found in the cytoskeleton. In terms of biological role, giardins are involved in parasite attachment to the intestinal mucosa and in the cytoskeletal disassembly and reassembly that marks the transition from infectious trophozoite to transmissible cyst. They may interact with other cytoskeletal proteins such as microtubules in the microribbons or crossbridges, to maintain the integrity of the ventral disk. Involved in formation of the ventral disk. The sequence is that of Giardin subunit gamma from Giardia intestinalis (Giardia lamblia).